We begin with the raw amino-acid sequence, 516 residues long: Methionine--tRNA ligase (516 aa).

A 'HIGH' region motif is present at residues 13–23 (FYPNGKPHIGH). The 'KMSKS' region motif lies at 299–303 (KMSKS). Lys302 serves as a coordination point for ATP.

The protein belongs to the class-I aminoacyl-tRNA synthetase family. MetG type 2B subfamily. Monomer.

The protein resides in the cytoplasm. The catalysed reaction is tRNA(Met) + L-methionine + ATP = L-methionyl-tRNA(Met) + AMP + diphosphate. Functionally, is required not only for elongation of protein synthesis but also for the initiation of all mRNA translation through initiator tRNA(fMet) aminoacylation. The protein is Methionine--tRNA ligase of Mesorhizobium japonicum (strain LMG 29417 / CECT 9101 / MAFF 303099) (Mesorhizobium loti (strain MAFF 303099)).